We begin with the raw amino-acid sequence, 348 residues long: Bombesin receptor-activated protein C6orf89 homolog (348 aa).

The Cytoplasmic segment spans residues 1-58; it reads MDLAANEISIYDKLSETVDLVRQTGHQCGMSEKAIEKFIRQLLEKNEPQRGPPQYPLL. A helical transmembrane segment spans residues 59 to 79; it reads IAVYKVLLTLGLILFTAYFVI. Topologically, residues 80–348 are extracellular; the sequence is QPFSSLAPEP…ICDGTTLSDL (269 aa).

In terms of assembly, homodimer. Interacts with BRS3. Interacts (via N-terminus) with SIN3B. Glycosylated.

The protein localises to the golgi apparatus membrane. It is found in the cytoplasm. Exhibits histone deacetylase (HDAC) enhancer properties. May play a role in cell cycle progression and wound repair of bronchial epithelial cells. This is Bombesin receptor-activated protein C6orf89 homolog from Mus musculus (Mouse).